A 346-amino-acid chain; its full sequence is MRPILLSGHERALTQIKYNRDGDLLFSVSKDQQICVWFAHNGERLGTYHGHQGAIWTIDVDPTSTILASGSADNTIRLWEIKTGRLLKTWDFPTAVKRVEFSEDGSKLLGVTEKRMGHLGTIVVLDIKLDVDAEQSDEKAMTIVCEDSKATVAGWSYLSKYIIAGHEDGSVSQFDGKNGDLLYNIPIHELNQPITDLQWSHDRTYFITASKDKTSKLITAKDLEVLKTYPADTPLNSATITRKKDFVILGGGQAAMDVTTTSARQGKFEARFYHKIFESEIGRVRGHFGPLNTVAADPTGKSYASGGEDGYVRIHHFDKGYFDFMYEVERERQNKLNQQQQQTISA.

WD repeat units follow at residues 8–49, 50–91, 145–184, 189–228, and 286–325; these read GHER…GTYH, GHQG…KTWD, CEDSKATVAGWSYLSKYIIAGHEDGSVSQFDGKNGDLLYN, ELNQPITDLQWSHDRTYFITASKDKTSKLITAKDLEVLKT, and GHFGPLNTVAADPTGKSYASGGEDGYVRIHHFDKGYFDFM.

Belongs to the eIF-3 subunit I family. In terms of assembly, component of the eukaryotic translation initiation factor 3 (eIF-3) complex.

Its subcellular location is the cytoplasm. Component of the eukaryotic translation initiation factor 3 (eIF-3) complex, which is involved in protein synthesis of a specialized repertoire of mRNAs and, together with other initiation factors, stimulates binding of mRNA and methionyl-tRNAi to the 40S ribosome. The eIF-3 complex specifically targets and initiates translation of a subset of mRNAs involved in cell proliferation. The sequence is that of Eukaryotic translation initiation factor 3 subunit I (tif-34) from Neurospora crassa (strain ATCC 24698 / 74-OR23-1A / CBS 708.71 / DSM 1257 / FGSC 987).